Reading from the N-terminus, the 203-residue chain is N-(5'-phosphoribosyl)anthranilate isomerase (203 aa).

Belongs to the TrpF family.

The catalysed reaction is N-(5-phospho-beta-D-ribosyl)anthranilate = 1-(2-carboxyphenylamino)-1-deoxy-D-ribulose 5-phosphate. Its pathway is amino-acid biosynthesis; L-tryptophan biosynthesis; L-tryptophan from chorismate: step 3/5. This chain is N-(5'-phosphoribosyl)anthranilate isomerase, found in Geobacter sulfurreducens (strain ATCC 51573 / DSM 12127 / PCA).